Consider the following 490-residue polypeptide: Katanin p60 ATPase-containing subunit A-like 1 (490 aa).

M1 bears the N-acetylmethionine mark. The interval 96-182 (PAVWPPPVPA…ASDGEIPKFD (87 aa)) is disordered. Residues 116–127 (PNREVRPLRKEM) are compositionally biased toward basic and acidic residues. The segment covering 128 to 139 (AGVGARGPVGRA) has biased composition (low complexity). Residues 143-169 (SKSEKPSASRDKDCRARGRDDKGRKNM) are compositionally biased toward basic and acidic residues. S174 carries the phosphoserine modification. Residue 248-255 (GPPGTGKT) coordinates ATP.

This sequence belongs to the AAA ATPase family. Katanin p60 subunit A1 subfamily. A-like 1 sub-subfamily. Interacts with KATNB1 and KATNBL1.

It localises to the cytoplasm. Its subcellular location is the cytoskeleton. It is found in the spindle pole. The protein resides in the spindle. The enzyme catalyses n ATP + n H2O + a microtubule = n ADP + n phosphate + (n+1) alpha/beta tubulin heterodimers.. Regulates microtubule dynamics in Sertoli cells, a process that is essential for spermiogenesis and male fertility. Severs microtubules in an ATP-dependent manner, promoting rapid reorganization of cellular microtubule arrays. Has microtubule-severing activity in vitro. This chain is Katanin p60 ATPase-containing subunit A-like 1, found in Oryctolagus cuniculus (Rabbit).